Consider the following 220-residue polypeptide: Aspartic protease inhibitor 8 (220 aa).

The N-terminal stretch at 1-23 (MMKCLFLLCLCLLPIVVFSSTFT) is a signal peptide. A propeptide spanning residues 24–32 (SQNLIDLPS) is cleaved from the precursor. Disulfide bonds link Cys80/Cys125 and Cys174/Cys185.

Belongs to the protease inhibitor I3 (leguminous Kunitz-type inhibitor) family.

The protein resides in the vacuole. Its function is as follows. Inhibitor of cathepsin D (aspartic protease) and trypsin (serine protease). May protect the plant by inhibiting proteases of invading organisms. In Solanum tuberosum (Potato), this protein is Aspartic protease inhibitor 8.